The chain runs to 481 residues: DNA gyrase subunit B (481 aa).

A Toprim domain is found at 323 to 442 (CELYLVEGDS…QGYVYIAQPP (120 aa)). Mg(2+) contacts are provided by glutamate 329, aspartate 407, and aspartate 409.

It belongs to the type II topoisomerase GyrB family. In terms of assembly, heterotetramer, composed of two GyrA and two GyrB chains. In the heterotetramer, GyrA contains the active site tyrosine that forms a transient covalent intermediate with DNA, while GyrB binds cofactors and catalyzes ATP hydrolysis. It depends on Mg(2+) as a cofactor. Requires Mn(2+) as cofactor. The cofactor is Ca(2+).

The protein localises to the cytoplasm. The enzyme catalyses ATP-dependent breakage, passage and rejoining of double-stranded DNA.. A type II topoisomerase that negatively supercoils closed circular double-stranded (ds) DNA in an ATP-dependent manner to modulate DNA topology and maintain chromosomes in an underwound state. Negative supercoiling favors strand separation, and DNA replication, transcription, recombination and repair, all of which involve strand separation. Also able to catalyze the interconversion of other topological isomers of dsDNA rings, including catenanes and knotted rings. Type II topoisomerases break and join 2 DNA strands simultaneously in an ATP-dependent manner. The chain is DNA gyrase subunit B (gyrB) from Chitinophaga japonensis (Flexibacter japonensis).